The chain runs to 557 residues: Phosphomethylpyrimidine synthase (557 aa).

Substrate contacts are provided by residues asparagine 197, methionine 226, tyrosine 255, histidine 291, 311–313 (SRG), 352–355 (DGLR), and glutamate 391. Zn(2+) is bound at residue histidine 395. Tyrosine 418 contacts substrate. Histidine 459 contributes to the Zn(2+) binding site. [4Fe-4S] cluster-binding residues include cysteine 539, cysteine 542, and cysteine 547.

Belongs to the ThiC family. In terms of assembly, homodimer. [4Fe-4S] cluster serves as cofactor.

The enzyme catalyses 5-amino-1-(5-phospho-beta-D-ribosyl)imidazole + S-adenosyl-L-methionine = 4-amino-2-methyl-5-(phosphooxymethyl)pyrimidine + CO + 5'-deoxyadenosine + formate + L-methionine + 3 H(+). Its pathway is cofactor biosynthesis; thiamine diphosphate biosynthesis. Its function is as follows. Catalyzes the synthesis of the hydroxymethylpyrimidine phosphate (HMP-P) moiety of thiamine from aminoimidazole ribotide (AIR) in a radical S-adenosyl-L-methionine (SAM)-dependent reaction. This is Phosphomethylpyrimidine synthase from Anaplasma phagocytophilum (strain HZ).